A 256-amino-acid chain; its full sequence is Isoprenyl transferase (256 aa).

D33 is an active-site residue. Mg(2+) is bound at residue D33. Substrate contacts are provided by residues 34-37, W38, R46, H50, and 78-80; these read GNGR and STE. N81 serves as the catalytic Proton acceptor. Substrate-binding positions include W82, R84, R201, and 207 to 209; that span reads RIS. E220 contacts Mg(2+).

This sequence belongs to the UPP synthase family. Homodimer. The cofactor is Mg(2+).

Catalyzes the condensation of isopentenyl diphosphate (IPP) with allylic pyrophosphates generating different type of terpenoids. The chain is Isoprenyl transferase from Staphylococcus aureus (strain Mu50 / ATCC 700699).